The following is a 678-amino-acid chain: Putative pentatricopeptide repeat-containing protein At3g18840 (678 aa).

PPR repeat units follow at residues Thr-22–Ser-56, Trp-57–Arg-84, Asp-85–Lys-116, Asp-124–Gly-158, Thr-159–Phe-190, Asp-192–Leu-222, Asp-224–Trp-258, Asp-259–Ser-293, Asn-294–Gly-324, Asn-325–Val-359, Trp-360–Thr-390, Asp-392–Met-426, Asp-427–Arg-457, Asp-458–Pro-492, Asp-493–Pro-528, and Glu-529–Ala-563. The tract at residues Ile-565 to Asp-640 is type E motif. The tract at residues Lys-641 to Ser-671 is type E(+) motif.

It belongs to the PPR family. PCMP-E subfamily.

The polypeptide is Putative pentatricopeptide repeat-containing protein At3g18840 (PCMP-E92) (Arabidopsis thaliana (Mouse-ear cress)).